The following is a 396-amino-acid chain: Elongation factor Tu 2 (396 aa).

The region spanning 10 to 206 (KLHVNVGTIG…ALDTFIPDPT (197 aa)) is the tr-type G domain. Residues 19-26 (GHVDHGKT) form a G1 region. 19–26 (GHVDHGKT) is a GTP binding site. Position 26 (threonine 26) interacts with Mg(2+). The G2 stretch occupies residues 60 to 64 (GITIS). The interval 81 to 84 (DCPG) is G3. GTP is bound by residues 81–85 (DCPGH) and 136–139 (NKAD). A G4 region spans residues 136–139 (NKAD). A G5 region spans residues 174–176 (SAR).

This sequence belongs to the TRAFAC class translation factor GTPase superfamily. Classic translation factor GTPase family. EF-Tu/EF-1A subfamily. Monomer.

Its subcellular location is the cytoplasm. It carries out the reaction GTP + H2O = GDP + phosphate + H(+). Functionally, GTP hydrolase that promotes the GTP-dependent binding of aminoacyl-tRNA to the A-site of ribosomes during protein biosynthesis. This Xanthomonas campestris pv. campestris (strain 8004) protein is Elongation factor Tu 2.